Consider the following 300-residue polypeptide: Ribosomal protein L11 methyltransferase (300 aa).

S-adenosyl-L-methionine-binding residues include T152, G173, D195, and N234.

It belongs to the methyltransferase superfamily. PrmA family.

Its subcellular location is the cytoplasm. It catalyses the reaction L-lysyl-[protein] + 3 S-adenosyl-L-methionine = N(6),N(6),N(6)-trimethyl-L-lysyl-[protein] + 3 S-adenosyl-L-homocysteine + 3 H(+). Its function is as follows. Methylates ribosomal protein L11. In Burkholderia vietnamiensis (strain G4 / LMG 22486) (Burkholderia cepacia (strain R1808)), this protein is Ribosomal protein L11 methyltransferase.